The primary structure comprises 318 residues: Ribosomal large subunit pseudouridine synthase B (318 aa).

Residues 3 to 75 (EKLQKILARA…VCRVLAYYKP (73 aa)) enclose the S4 RNA-binding domain. Asp110 functions as the Nucleophile in the catalytic mechanism. A disordered region spans residues 271–318 (AVKRHTEVSGRQVAGRQGSARKGSTRQNVGNAAPAATASRRSGPKKRG).

It belongs to the pseudouridine synthase RsuA family.

The enzyme catalyses uridine(2605) in 23S rRNA = pseudouridine(2605) in 23S rRNA. Responsible for synthesis of pseudouridine from uracil-2605 in 23S ribosomal RNA. This is Ribosomal large subunit pseudouridine synthase B (rluB) from Yersinia pestis.